Reading from the N-terminus, the 916-residue chain is Chitin synthase B (916 aa).

Disordered stretches follow at residues 1–84 (MAYQ…AGFH) and 114–141 (SPYA…GGGL). N-linked (GlcNAc...) asparagine glycosylation occurs at N18. The segment covering 60–75 (RGTSPVRPTSGYSLTE) has biased composition (polar residues). N546 carries N-linked (GlcNAc...) asparagine glycosylation. 7 consecutive transmembrane segments (helical) span residues 572 to 594 (MFFL…FSLA), 628 to 648 (IINT…FILA), 663 to 683 (SFVV…YLVV), 715 to 735 (IIII…FMYL), 743 to 763 (SFPA…VYAF), 845 to 865 (LVTL…SDGM), and 884 to 904 (ALLW…CWFL).

It belongs to the chitin synthase family. Class III subfamily.

The protein resides in the cell membrane. The catalysed reaction is [(1-&gt;4)-N-acetyl-beta-D-glucosaminyl](n) + UDP-N-acetyl-alpha-D-glucosamine = [(1-&gt;4)-N-acetyl-beta-D-glucosaminyl](n+1) + UDP + H(+). Its function is as follows. Polymerizes chitin, a structural polymer of the cell wall and septum, by transferring the sugar moiety of UDP-GlcNAc to the non-reducing end of the growing chitin polymer. Involved in hyphal growth and more particularly in branching. This is Chitin synthase B from Aspergillus oryzae (strain ATCC 42149 / RIB 40) (Yellow koji mold).